Here is a 168-residue protein sequence, read N- to C-terminus: uncharacterized protein (168 aa).

The helical transmembrane segment at 23-47 threads the bilayer; sequence LFARASIIGVALLLSACATVPMASV.

It localises to the membrane. This is an uncharacterized protein from Haemophilus influenzae (strain ATCC 51907 / DSM 11121 / KW20 / Rd).